A 339-amino-acid chain; its full sequence is GTP 3',8-cyclase (339 aa).

Residues 13 to 249 (RYGRPLRDLR…GEVAQRHAFA (237 aa)) enclose the Radical SAM core domain. Arginine 22 contacts GTP. 2 residues coordinate [4Fe-4S] cluster: cysteine 29 and cysteine 33. Residue tyrosine 35 participates in S-adenosyl-L-methionine binding. Residue cysteine 36 coordinates [4Fe-4S] cluster. Residue arginine 75 coordinates GTP. Glycine 79 is an S-adenosyl-L-methionine binding site. GTP is bound at residue threonine 106. Serine 130 is a binding site for S-adenosyl-L-methionine. Position 168 (lysine 168) interacts with GTP. Position 202 (methionine 202) interacts with S-adenosyl-L-methionine. Residues cysteine 266 and cysteine 269 each contribute to the [4Fe-4S] cluster site. 271-273 (RAR) provides a ligand contact to GTP. Cysteine 283 contributes to the [4Fe-4S] cluster binding site.

This sequence belongs to the radical SAM superfamily. MoaA family. As to quaternary structure, monomer and homodimer. [4Fe-4S] cluster is required as a cofactor.

It carries out the reaction GTP + AH2 + S-adenosyl-L-methionine = (8S)-3',8-cyclo-7,8-dihydroguanosine 5'-triphosphate + 5'-deoxyadenosine + L-methionine + A + H(+). It participates in cofactor biosynthesis; molybdopterin biosynthesis. Catalyzes the cyclization of GTP to (8S)-3',8-cyclo-7,8-dihydroguanosine 5'-triphosphate. The sequence is that of GTP 3',8-cyclase from Xanthomonas campestris pv. campestris (strain 8004).